The primary structure comprises 226 residues: Fibrillarin-like rRNA/tRNA 2'-O-methyltransferase (226 aa).

Residues T85–T86, E104–F105, D129–A130, and D149–Q152 each bind S-adenosyl-L-methionine.

The protein belongs to the methyltransferase superfamily. Fibrillarin family. As to quaternary structure, interacts with nop5. Component of box C/D small ribonucleoprotein (sRNP) particles that contain rpl7ae, FlpA and nop5, plus a guide RNA.

Functionally, involved in pre-rRNA and tRNA processing. Utilizes the methyl donor S-adenosyl-L-methionine to catalyze the site-specific 2'-hydroxyl methylation of ribose moieties in rRNA and tRNA. Site specificity is provided by a guide RNA that base pairs with the substrate. Methylation occurs at a characteristic distance from the sequence involved in base pairing with the guide RNA. The polypeptide is Fibrillarin-like rRNA/tRNA 2'-O-methyltransferase (Thermococcus sibiricus (strain DSM 12597 / MM 739)).